A 240-amino-acid polypeptide reads, in one-letter code: Uridylate kinase (240 aa).

An ATP-binding site is contributed by 13–16 (KLSG). The involved in allosteric activation by GTP stretch occupies residues 21 to 26 (GDDGFG). UMP is bound at residue Gly55. Positions 56 and 60 each coordinate ATP. Residues Asp75 and 136–143 (IGNPYFST) each bind UMP. Residues Asn164, Tyr170, and Asp173 each coordinate ATP.

The protein belongs to the UMP kinase family. In terms of assembly, homohexamer.

The protein localises to the cytoplasm. The enzyme catalyses UMP + ATP = UDP + ADP. It functions in the pathway pyrimidine metabolism; CTP biosynthesis via de novo pathway; UDP from UMP (UMPK route): step 1/1. With respect to regulation, allosterically activated by GTP. Inhibited by UTP. Catalyzes the reversible phosphorylation of UMP to UDP. The polypeptide is Uridylate kinase (Staphylococcus saprophyticus subsp. saprophyticus (strain ATCC 15305 / DSM 20229 / NCIMB 8711 / NCTC 7292 / S-41)).